The chain runs to 184 residues: Mediator of RNA polymerase II transcription subunit 11 (184 aa).

Positions 142 to 152 (ATTKQETNINN) are enriched in polar residues. The interval 142-184 (ATTKQETNINNEDSEKEKQENITAIETKKESSENEDEDFDMIA) is disordered. The segment covering 154-173 (DSEKEKQENITAIETKKESS) has biased composition (basic and acidic residues). Over residues 174-184 (ENEDEDFDMIA) the composition is skewed to acidic residues.

Belongs to the Mediator complex subunit 11 family. Component of the Mediator complex.

Its subcellular location is the nucleus. Functionally, component of the Mediator complex, a coactivator involved in the regulated transcription of nearly all RNA polymerase II-dependent genes. Mediator functions as a bridge to convey information from gene-specific regulatory proteins to the basal RNA polymerase II transcription machinery. Mediator is recruited to promoters by direct interactions with regulatory proteins and serves as a scaffold for the assembly of a functional pre-initiation complex with RNA polymerase II and the general transcription factors. The polypeptide is Mediator of RNA polymerase II transcription subunit 11 (MED11) (Debaryomyces hansenii (strain ATCC 36239 / CBS 767 / BCRC 21394 / JCM 1990 / NBRC 0083 / IGC 2968) (Yeast)).